The sequence spans 676 residues: MNATLNSAGGKRQLRFRGDVTGSRVEELHHQQQEEQKQKAPLAQDDVAATPTATPAAGSAQQRLQSGTAETCTNTFYDFFKVEMTRGYMLEHDEERYSARRQKIYSFMRIPRDLERFMVYGIMQCADSFLYIHTFLPVRFVMAVWALVSRTVARIFRLRSSGQRLLSPAEICDLLKGVIWMTVTLIMLLVDTNRVYHIIKSQSIIKLYIFYNMLEVGDRLLSAFGQDTIDALFWTATEPKNSKREHFGVLTHVLFTLIYVFLHSGLIMFQATCLNVAVNSNNKGLLTIMISNNFVELKGSVFKKFDKNNLFQLTCSDVRERFHLSVLLFIVVIQTMKEFDWSITQFCVMLPDCFAVLFTEILIDWVKHAFITRFNELPESIYREYTTSLAYDMTQTRQKHAFSDHSDLVARRMGFIPFPLAVVLIKAIYTAVSFENLAAWLLFLLAYLFAMGLRICLTICALGKACKLMKEHQTERNSSTPSSMTNVPVIGAAAPVSAAATGGQNHNNNNNNNNNSISIGSKPAQVTTLLTPPSAGHLDVSKNFSRTSIASTSTPKKAVSEQELDVTNSLELGATALFSNSDVDLDDVCLNEQVTNTNTSSAVQEVYQEQDLVRSQPDLMLLNNSGDGVTSAKAKKATQRLPKRTHKRSESEPGMPSMVEKGGAAGIAGGNQTTQL.

The interval 1 to 44 is disordered; the sequence is MNATLNSAGGKRQLRFRGDVTGSRVEELHHQQQEEQKQKAPLAQ. Positions 24–38 are enriched in basic and acidic residues; it reads RVEELHHQQQEEQKQ. Transmembrane regions (helical) follow at residues 128 to 148, 170 to 190, 249 to 269, 346 to 366, 414 to 434, and 437 to 457; these read SFLY…WALV, EICD…MLLV, VLTH…LIMF, FCVM…IDWV, GFIP…AVSF, and LAAW…RICL. The tract at residues 625–676 is disordered; that stretch reads SGDGVTSAKAKKATQRLPKRTHKRSESEPGMPSMVEKGGAAGIAGGNQTTQL. Positions 633–647 are enriched in basic residues; the sequence is KAKKATQRLPKRTHK.

The protein belongs to the TAPT1 family.

Its subcellular location is the membrane. The polypeptide is Protein TAPT1 homolog (Drosophila melanogaster (Fruit fly)).